We begin with the raw amino-acid sequence, 184 residues long: Cathelicidin-related peptide Pt_CRAMP2 (184 aa).

An N-terminal signal peptide occupies residues 1-22 (MDGFFWKTWLVVAALAIGGTSS). Residues 23-150 (LPHKPLTYEE…EDEKDQPRRV (128 aa)) constitute a propeptide that is removed on maturation. Intrachain disulfides connect C81–C92 and C103–C120. Residues 125-144 (EDEEQNQEEEEEEEKEEDEK) are compositionally biased toward acidic residues. Residues 125 to 147 (EDEEQNQEEEEEEEKEEDEKDQP) are disordered.

Belongs to the cathelicidin family. In terms of tissue distribution, expressed by the venom gland.

The protein localises to the secreted. It is found in the target cell membrane. Potent antimicrobial peptide against most of Gram-negative bacteria, some Gram-positive bacteria (Bacillus) and some fungi (C.albicans, P.pastoris, A.terreus, A.nidulans, and C.globosum). Adopts an amphipathic alpha helical conformation, that may allow to partition into the target membrane. No hemolytic and cytotoxic activities have been observed on mammalian cells. This is Cathelicidin-related peptide Pt_CRAMP2 from Pseudonaja textilis (Eastern brown snake).